A 128-amino-acid polypeptide reads, in one-letter code: PFMFRPRKQVFPDPRSGSVINGSNPTAERPCQQSYGISFYGFARCQRGRPKSNEDYKDIKFSIGCMGKCKRNTKQPRVLEAALEQMCAADCRDDNSSDASGPFDSALLRNIDGRRDYKPDKSVRRNSS.

Disordered stretches follow at residues 1–27 (PFMFRPRKQVFPDPRSGSVINGSNPTA) and 92–128 (RDDNSSDASGPFDSALLRNIDGRRDYKPDKSVRRNSS). Residues 18-27 (SVINGSNPTA) show a composition bias toward polar residues. Basic and acidic residues predominate over residues 111–128 (IDGRRDYKPDKSVRRNSS).

This sequence belongs to the encephalomyocarditis virus protein 2B* family.

The polypeptide is Protein 2B* (Aotus trivirgatus (Three-striped night monkey)).